Consider the following 122-residue polypeptide: Large ribosomal subunit protein bL12 (122 aa).

This sequence belongs to the bacterial ribosomal protein bL12 family. In terms of assembly, homodimer. Part of the ribosomal stalk of the 50S ribosomal subunit. Forms a multimeric L10(L12)X complex, where L10 forms an elongated spine to which 2 to 4 L12 dimers bind in a sequential fashion. Binds GTP-bound translation factors.

Its function is as follows. Forms part of the ribosomal stalk which helps the ribosome interact with GTP-bound translation factors. Is thus essential for accurate translation. This Shewanella denitrificans (strain OS217 / ATCC BAA-1090 / DSM 15013) protein is Large ribosomal subunit protein bL12.